Reading from the N-terminus, the 335-residue chain is UPF0284 protein TON_0688 (335 aa).

It belongs to the UPF0284 family.

This Thermococcus onnurineus (strain NA1) protein is UPF0284 protein TON_0688.